The chain runs to 128 residues: Mediator of RNA polymerase II transcription subunit 31-A (128 aa).

This sequence belongs to the Mediator complex subunit 31 family. As to quaternary structure, component of the Mediator complex.

The protein resides in the nucleus. Its function is as follows. Component of the Mediator complex, a coactivator involved in the regulated transcription of nearly all RNA polymerase II-dependent genes. Mediator functions as a bridge to convey information from gene-specific regulatory proteins to the basal RNA polymerase II transcription machinery. Mediator is recruited to promoters by direct interactions with regulatory proteins and serves as a scaffold for the assembly of a functional preinitiation complex with RNA polymerase II and the general transcription factors. The chain is Mediator of RNA polymerase II transcription subunit 31-A (med31-a) from Xenopus laevis (African clawed frog).